We begin with the raw amino-acid sequence, 133 residues long: Large ribosomal subunit protein bL20 (133 aa).

It belongs to the bacterial ribosomal protein bL20 family.

Binds directly to 23S ribosomal RNA and is necessary for the in vitro assembly process of the 50S ribosomal subunit. It is not involved in the protein synthesizing functions of that subunit. The polypeptide is Large ribosomal subunit protein bL20 (Bartonella henselae (strain ATCC 49882 / DSM 28221 / CCUG 30454 / Houston 1) (Rochalimaea henselae)).